Here is a 535-residue protein sequence, read N- to C-terminus: Signal transduction histidine-protein kinase AfsQ2 (535 aa).

The Cytoplasmic portion of the chain corresponds to 1 to 30; the sequence is MTREHQGGTRGLAAARKGFWSGLRFTSLRL. A helical membrane pass occupies residues 31 to 52; that stretch reads RLVLVFGLVALTAAVSASGIAY. Over 53 to 198 the chain is Extracellular; that stretch reads WLNREAVLTR…SLEPEAKDLN (146 aa). The chain crosses the membrane as a helical span at residues 199–219; sequence SLAWSLGIATALALLGSALLA. The Cytoplasmic segment spans residues 220 to 535; that stretch reads QALATTVLKP…DRGKDAKGQV (316 aa). The region spanning 224–276 is the HAMP domain; that stretch reads TTVLKPVHRLGVAARRLGEGKLDTRLRVSGTDELADLSRTFNSAAENLEKRVA. The Histidine kinase domain maps to 291–510; that stretch reads DMSHELRTPL…VFTLRLPQDP (220 aa). Histidine 294 carries the phosphohistidine modification. Residues 493 to 535 are disordered; the sequence is ENAPEGGAVFTLRLPQDPSPPADEDGGPDEETEDRGKDAKGQV. Over residues 514-525 the composition is skewed to acidic residues; sequence ADEDGGPDEETE. Basic and acidic residues predominate over residues 526 to 535; the sequence is DRGKDAKGQV.

The protein localises to the cell membrane. It carries out the reaction ATP + protein L-histidine = ADP + protein N-phospho-L-histidine.. In terms of biological role, forms part of a two-component regulatory system AfsQ1/AfsQ2 involved in secondary metabolism. May activate AfsQ1 by phosphorylation. The protein is Signal transduction histidine-protein kinase AfsQ2 (afsQ2) of Streptomyces coelicolor (strain ATCC BAA-471 / A3(2) / M145).